The chain runs to 256 residues: MMLAIDIGNSSIVTGVYDENDQLAFIFRIATTHDKTSDEYAMLLHSFFEQKGCRFNDVTGVIIASVVPTIMHRFRRMCQDYLHVTPLIVGPGIRTGLSIHYQDPKEVGADRIANAVAAIARYGAPCIVVDIGTATTFCCIDAKHRYRGGVIAPGAAISTAALSNKASKLPKIELTKPASVVGKTTVASMESGTFYGHIAMIDGVVERIKEEQRLDDAKVIATGGLAYLYAEESKQIQHLEQELTLSGLKYIYDKNQ.

6–13 (DIGNSSIV) lines the ATP pocket. Substrate contacts are provided by residues Tyr101 and 108–111 (GADR). Asp110 serves as the catalytic Proton acceptor. Asp130 is a K(+) binding site. Position 133 (Thr133) interacts with ATP. Thr185 lines the substrate pocket.

The protein belongs to the type III pantothenate kinase family. Homodimer. Requires NH4(+) as cofactor. K(+) serves as cofactor.

It is found in the cytoplasm. It catalyses the reaction (R)-pantothenate + ATP = (R)-4'-phosphopantothenate + ADP + H(+). It participates in cofactor biosynthesis; coenzyme A biosynthesis; CoA from (R)-pantothenate: step 1/5. Its function is as follows. Catalyzes the phosphorylation of pantothenate (Pan), the first step in CoA biosynthesis. The polypeptide is Type III pantothenate kinase (Shouchella clausii (strain KSM-K16) (Alkalihalobacillus clausii)).